The chain runs to 419 residues: Serine hydroxymethyltransferase (419 aa).

Residues Leu-118 and 122 to 124 (GHL) each bind (6S)-5,6,7,8-tetrahydrofolate. Lys-227 is subject to N6-(pyridoxal phosphate)lysine.

Belongs to the SHMT family. In terms of assembly, homodimer. Pyridoxal 5'-phosphate serves as cofactor.

It localises to the cytoplasm. It catalyses the reaction (6R)-5,10-methylene-5,6,7,8-tetrahydrofolate + glycine + H2O = (6S)-5,6,7,8-tetrahydrofolate + L-serine. Its pathway is one-carbon metabolism; tetrahydrofolate interconversion. The protein operates within amino-acid biosynthesis; glycine biosynthesis; glycine from L-serine: step 1/1. Functionally, catalyzes the reversible interconversion of serine and glycine with tetrahydrofolate (THF) serving as the one-carbon carrier. This reaction serves as the major source of one-carbon groups required for the biosynthesis of purines, thymidylate, methionine, and other important biomolecules. Also exhibits THF-independent aldolase activity toward beta-hydroxyamino acids, producing glycine and aldehydes, via a retro-aldol mechanism. The polypeptide is Serine hydroxymethyltransferase (Chloroflexus aurantiacus (strain ATCC 29364 / DSM 637 / Y-400-fl)).